The following is a 633-amino-acid chain: MA3 DOMAIN-CONTAINING TRANSLATION REGULATORY FACTOR 4 (633 aa).

MI domains follow at residues 56 to 177 (DYKR…RAKK), 220 to 341 (ETKR…ERSD), 351 to 472 (RFKK…EISN), and 514 to 633 (DAKD…STDS). The Nuclear localization signal 1 motif lies at 94–101 (VKRLVSMA). The short motif at 389–396 (LKKLITLA) is the Nuclear localization signal 2 element.

The protein belongs to the PDCD4 family. As to quaternary structure, binds to EIF4A1. The association with ribosomes is modulated by cellular energy status and TOR activity. As to expression, mostly expressed, at low levels, in rosette leaves and flower buds, and, to a lower extent, in roots, stems, cauline leaves and flowers.

It localises to the nucleus. The protein resides in the cytoplasm. It is found in the cytosol. Functionally, involved in target of rapamycin (TOR)-regulated translation control, especially under energy-deficient conditions. The sequence is that of MA3 DOMAIN-CONTAINING TRANSLATION REGULATORY FACTOR 4 from Arabidopsis thaliana (Mouse-ear cress).